A 590-amino-acid chain; its full sequence is UvrABC system protein C (590 aa).

The 78-residue stretch at 14–91 (DQPGCYLMKD…IKKHDPKYNV (78 aa)) folds into the GIY-YIG domain. The UVR domain maps to 196–231 (NEVKKELEEKMHEAAENLEFERAKELRDQIAHIEST).

The protein belongs to the UvrC family. Interacts with UvrB in an incision complex.

It localises to the cytoplasm. In terms of biological role, the UvrABC repair system catalyzes the recognition and processing of DNA lesions. UvrC both incises the 5' and 3' sides of the lesion. The N-terminal half is responsible for the 3' incision and the C-terminal half is responsible for the 5' incision. This Bacillus subtilis (strain 168) protein is UvrABC system protein C.